A 101-amino-acid polypeptide reads, in one-letter code: Small ribosomal subunit protein uS17 (101 aa).

It belongs to the universal ribosomal protein uS17 family. In terms of assembly, part of the 30S ribosomal subunit.

One of the primary rRNA binding proteins, it binds specifically to the 5'-end of 16S ribosomal RNA. The sequence is that of Small ribosomal subunit protein uS17 from Leifsonia xyli subsp. xyli (strain CTCB07).